The chain runs to 311 residues: Putative dihydroorotate dehydrogenase A (fumarate) (311 aa).

Residues lysine 45, asparagine 69–leucine 73, and asparagine 128 contribute to the substrate site. Lysine 45–threonine 46 provides a ligand contact to FMN. Asparagine 128 provides a ligand contact to FMN. The active-site Nucleophile is the cysteine 131. Positions 165 and 193 each coordinate FMN. Asparagine 194–serine 195 contacts substrate. FMN contacts are provided by residues glycine 220, glycine 248–glycine 249, and glycine 270–threonine 271.

The protein belongs to the dihydroorotate dehydrogenase family. Type 1 subfamily. Homodimer. It depends on FMN as a cofactor.

The protein localises to the cytoplasm. The enzyme catalyses (S)-dihydroorotate + fumarate = orotate + succinate. Its pathway is pyrimidine metabolism; UMP biosynthesis via de novo pathway. Catalyzes the conversion of dihydroorotate to orotate with fumarate as the electron acceptor. This is Putative dihydroorotate dehydrogenase A (fumarate) (pyrD) from Streptococcus uberis (strain ATCC BAA-854 / 0140J).